The primary structure comprises 453 residues: GTPase Der (453 aa).

2 consecutive EngA-type G domains span residues 4–169 and 177–352; these read PIVA…SETP and IKVA…RQFE. GTP is bound by residues 10–17, 57–61, 120–123, 183–190, 230–234, and 295–298; these read GRPNVGKS, DTGGL, NKCE, DTAGI, and NKWD. Residues 353–438 enclose the KH-like domain; that stretch reads QRVTTSVINE…PIRLLWRGKK (86 aa).

This sequence belongs to the TRAFAC class TrmE-Era-EngA-EngB-Septin-like GTPase superfamily. EngA (Der) GTPase family. Associates with the 50S ribosomal subunit.

Functionally, GTPase that plays an essential role in the late steps of ribosome biogenesis. The protein is GTPase Der of Acaryochloris marina (strain MBIC 11017).